A 211-amino-acid chain; its full sequence is N-(5'-phosphoribosyl)anthranilate isomerase (211 aa).

It belongs to the TrpF family.

The enzyme catalyses N-(5-phospho-beta-D-ribosyl)anthranilate = 1-(2-carboxyphenylamino)-1-deoxy-D-ribulose 5-phosphate. Its pathway is amino-acid biosynthesis; L-tryptophan biosynthesis; L-tryptophan from chorismate: step 3/5. The polypeptide is N-(5'-phosphoribosyl)anthranilate isomerase (Pseudomonas aeruginosa (strain LESB58)).